Reading from the N-terminus, the 499-residue chain is Cysteine--tRNA ligase (499 aa).

A Zn(2+)-binding site is contributed by Cys-29. Positions 31–41 (VTVYDLCHLGH) match the 'HIGH' region motif. 3 residues coordinate Zn(2+): Cys-213, His-238, and Glu-242. Positions 270–274 (KMSKS) match the 'KMSKS' region motif. Lys-273 contacts ATP.

It belongs to the class-I aminoacyl-tRNA synthetase family. In terms of assembly, monomer. The cofactor is Zn(2+).

The protein resides in the cytoplasm. The catalysed reaction is tRNA(Cys) + L-cysteine + ATP = L-cysteinyl-tRNA(Cys) + AMP + diphosphate. The polypeptide is Cysteine--tRNA ligase (Synechococcus sp. (strain CC9902)).